The sequence spans 306 residues: Pseudouridine-5'-phosphate glycosidase (306 aa).

The active-site Proton donor is E27. Substrate is bound by residues K88 and V108. D140 lines the Mn(2+) pocket. Substrate is bound at residue 142 to 144; the sequence is SAD. K161 functions as the Nucleophile in the catalytic mechanism.

The protein belongs to the pseudouridine-5'-phosphate glycosidase family. As to quaternary structure, homotrimer. Mn(2+) serves as cofactor.

The catalysed reaction is D-ribose 5-phosphate + uracil = psi-UMP + H2O. In terms of biological role, catalyzes the reversible cleavage of pseudouridine 5'-phosphate (PsiMP) to ribose 5-phosphate and uracil. Functions biologically in the cleavage direction, as part of a pseudouridine degradation pathway. The polypeptide is Pseudouridine-5'-phosphate glycosidase (Petrotoga mobilis (strain DSM 10674 / SJ95)).